Consider the following 59-residue polypeptide: Large ribosomal subunit protein bL32 (59 aa).

A compositionally biased stretch (basic residues) spans 1–15; that stretch reads MAVPKRKTSKSKRDM. A disordered region spans residues 1–21; sequence MAVPKRKTSKSKRDMRRASNS.

Belongs to the bacterial ribosomal protein bL32 family.

In Alkaliphilus metalliredigens (strain QYMF), this protein is Large ribosomal subunit protein bL32.